The following is a 100-amino-acid chain: Urease subunit gamma (100 aa).

This sequence belongs to the urease gamma subunit family. Heterotrimer of UreA (gamma), UreB (beta) and UreC (alpha) subunits. Three heterotrimers associate to form the active enzyme.

Its subcellular location is the cytoplasm. It catalyses the reaction urea + 2 H2O + H(+) = hydrogencarbonate + 2 NH4(+). Its pathway is nitrogen metabolism; urea degradation; CO(2) and NH(3) from urea (urease route): step 1/1. This chain is Urease subunit gamma, found in Methylibium petroleiphilum (strain ATCC BAA-1232 / LMG 22953 / PM1).